Consider the following 423-residue polypeptide: CinA-like protein (423 aa).

The protein belongs to the CinA family.

The sequence is that of CinA-like protein from Prochlorococcus marinus (strain SARG / CCMP1375 / SS120).